The primary structure comprises 321 residues: D-alanine--D-alanine ligase (321 aa).

The 195-residue stretch at 121–315 folds into the ATP-grasp domain; the sequence is RIWFLTNNIN…FTNLIEEIIK (195 aa). ATP is bound at residue 147–199; the sequence is PMKRPYVIKPLTQGSSIGVEVIFAEDDFNFADYDFPYGDQVIIEQYIKGRELQ. Mg(2+) is bound by residues Glu-268, Glu-282, and Asn-284.

The protein belongs to the D-alanine--D-alanine ligase family. Mg(2+) serves as cofactor. The cofactor is Mn(2+).

The protein localises to the cytoplasm. The enzyme catalyses 2 D-alanine + ATP = D-alanyl-D-alanine + ADP + phosphate + H(+). The protein operates within cell wall biogenesis; peptidoglycan biosynthesis. Its function is as follows. Cell wall formation. This Rickettsia rickettsii (strain Iowa) protein is D-alanine--D-alanine ligase.